A 365-amino-acid chain; its full sequence is F-box protein At1g48060 (365 aa).

Positions 1–20 (MKPQEEEEKNENMARKRSKS) are disordered. Residues 20–69 (SSSSLSIPLDIATDIFLRLPAKSVVRFSCVAKHWSSITTAPYFTNSFETR) form the F-box domain.

This Arabidopsis thaliana (Mouse-ear cress) protein is F-box protein At1g48060.